The sequence spans 421 residues: uncharacterized protein (421 aa).

One can recognise a TRAM domain in the interval Asp14–Gln72. Positions 250, 286, 308, and 349 each coordinate S-adenosyl-L-methionine. Cys376 serves as the catalytic Nucleophile.

The protein belongs to the class I-like SAM-binding methyltransferase superfamily. RNA M5U methyltransferase family.

This is an uncharacterized protein from Corynebacterium efficiens (strain DSM 44549 / YS-314 / AJ 12310 / JCM 11189 / NBRC 100395).